Here is a 286-residue protein sequence, read N- to C-terminus: Acetylglutamate kinase (286 aa).

Residues 70–71 (GG), Arg92, and Asn184 each bind substrate.

The protein belongs to the acetylglutamate kinase family. ArgB subfamily.

The protein localises to the cytoplasm. The catalysed reaction is N-acetyl-L-glutamate + ATP = N-acetyl-L-glutamyl 5-phosphate + ADP. It participates in amino-acid biosynthesis; L-arginine biosynthesis; N(2)-acetyl-L-ornithine from L-glutamate: step 2/4. Functionally, catalyzes the ATP-dependent phosphorylation of N-acetyl-L-glutamate. In Ruegeria sp. (strain TM1040) (Silicibacter sp.), this protein is Acetylglutamate kinase.